Reading from the N-terminus, the 406-residue chain is Tyrosine--tRNA ligase (406 aa).

Residue Tyr35 participates in L-tyrosine binding. A 'HIGH' region motif is present at residues Pro40–His49. L-tyrosine is bound by residues Tyr168 and Gln172. A 'KMSKS' region motif is present at residues Lys228 to Thr232. Residue Lys231 coordinates ATP. Positions Ala340–Val404 constitute an S4 RNA-binding domain.

Belongs to the class-I aminoacyl-tRNA synthetase family. TyrS type 1 subfamily. Homodimer.

It is found in the cytoplasm. The enzyme catalyses tRNA(Tyr) + L-tyrosine + ATP = L-tyrosyl-tRNA(Tyr) + AMP + diphosphate + H(+). Catalyzes the attachment of tyrosine to tRNA(Tyr) in a two-step reaction: tyrosine is first activated by ATP to form Tyr-AMP and then transferred to the acceptor end of tRNA(Tyr). This is Tyrosine--tRNA ligase from Clostridium perfringens (strain 13 / Type A).